Reading from the N-terminus, the 157-residue chain is Galactose-specific lectin (157 aa).

Positions 12 to 157 (SIVVGTWGAE…LDYIGFHLAL (146 aa)) constitute a Jacalin-type lectin domain. A glycan (N-linked (GlcNAc...) asparagine) is linked at asparagine 45.

The protein belongs to the jacalin lectin family. Tetramer of heterodimers of light and heavy chains which are non-covalently linked. N-linked carbohydrates at Asn-45 can be of complex or paucimannose type.

Alpha-D-galactose-specific lectin. Has hemagglutinating activity towards human and rabbit erythrocytes. Is highly cytotoxic to human cells in vitro. This is Galactose-specific lectin from Morus indica (Mulberry).